The following is a 577-amino-acid chain: Glycine--tRNA ligase (577 aa).

Residues R96 and E161 each contribute to the substrate site. Residues 193–195 (RNE), 203–208 (IRLREF), 319–320 (EI), and 434–437 (GIDR) each bind ATP. 208–212 (FSQAE) provides a ligand contact to substrate. 430 to 434 (EPSFG) contributes to the substrate binding site.

This sequence belongs to the class-II aminoacyl-tRNA synthetase family.

The protein resides in the cytoplasm. It carries out the reaction tRNA(Gly) + glycine + ATP = glycyl-tRNA(Gly) + AMP + diphosphate. Catalyzes the attachment of glycine to tRNA(Gly). The polypeptide is Glycine--tRNA ligase (Methanothrix thermoacetophila (strain DSM 6194 / JCM 14653 / NBRC 101360 / PT) (Methanosaeta thermophila)).